The primary structure comprises 385 residues: FK506-binding protein 5 (385 aa).

A PPIase FKBP-type domain is found at threonine 26 to tryptophan 115. 3 TPR repeats span residues alanine 128–leucine 161, valine 177–lysine 210, and isoleucine 211–leucine 244.

It carries out the reaction [protein]-peptidylproline (omega=180) = [protein]-peptidylproline (omega=0). Its activity is regulated as follows. Inhibited by both FK506 and rapamycin. Functionally, PPIases accelerate the folding of proteins. It catalyzes the cis-trans isomerization of proline imidic peptide bonds in oligopeptides. In Rhizopus delemar (strain RA 99-880 / ATCC MYA-4621 / FGSC 9543 / NRRL 43880) (Mucormycosis agent), this protein is FK506-binding protein 5 (FKBP5).